Reading from the N-terminus, the 331-residue chain is Olfactory receptor 6K3 (331 aa).

Residues 1-41 (MCWTMPSPFTGSSTRNMESGNQSTVTEFIFTGFPQLQDGSL) lie on the Extracellular side of the membrane. Asn-21 carries N-linked (GlcNAc...) asparagine glycosylation. The helical transmembrane segment at 42–62 (LYFFPLLFIYTFIIIDNLLIF) threads the bilayer. Topologically, residues 63-70 (SAVRLDTH) are cytoplasmic. The chain crosses the membrane as a helical span at residues 71 to 91 (LHNPMYNFISIFSFLEIWYTT). The Extracellular portion of the chain corresponds to 92 to 115 (ATIPKMLSNLISEKKAISMTGCIL). A disulfide bond links Cys-113 and Cys-205. A helical transmembrane segment spans residues 116 to 136 (QMYFFHSLENSEGILLTTMAI). Over 137-155 (DRYVAICNPLRYQMIMTPR) the chain is Cytoplasmic. The chain crosses the membrane as a helical span at residues 156 to 176 (LCAQLSAGSCLFGFLILLPEI). Residues 177-212 (VMISTLPFCGPNQIHQIFCDLVPVLSLACTDTSMIL) are Extracellular-facing. A helical transmembrane segment spans residues 213 to 232 (IEDVIHAVTIIITFLIIALS). The Cytoplasmic segment spans residues 233-252 (YVRIVTVILRIPSSEGRQKA). The chain crosses the membrane as a helical span at residues 253-273 (FSTCAGHLMVFPIFFGSVSLM). The Extracellular portion of the chain corresponds to 274–286 (YLRFSDTYPPVLD). Residues 287-307 (TAIALMFTVLAPFFNPIIYSL) traverse the membrane as a helical segment. The Cytoplasmic segment spans residues 308–331 (RNKDMNNAIKKLFCLQKVLNKPGG).

It belongs to the G-protein coupled receptor 1 family.

Its subcellular location is the cell membrane. In terms of biological role, odorant receptor. In Homo sapiens (Human), this protein is Olfactory receptor 6K3 (OR6K3).